A 726-amino-acid polypeptide reads, in one-letter code: Catalase-peroxidase (726 aa).

Residues Met1–Ser33 are disordered. Positions Trp105 to Tyr226 form a cross-link, tryptophyl-tyrosyl-methioninium (Trp-Tyr) (with M-252). His106 acts as the Proton acceptor in catalysis. The segment at residues Tyr226–Met252 is a cross-link (tryptophyl-tyrosyl-methioninium (Tyr-Met) (with W-105)). His267 is a binding site for heme b.

It belongs to the peroxidase family. Peroxidase/catalase subfamily. Homodimer or homotetramer. It depends on heme b as a cofactor. In terms of processing, formation of the three residue Trp-Tyr-Met cross-link is important for the catalase, but not the peroxidase activity of the enzyme.

It carries out the reaction H2O2 + AH2 = A + 2 H2O. The catalysed reaction is 2 H2O2 = O2 + 2 H2O. Functionally, bifunctional enzyme with both catalase and broad-spectrum peroxidase activity. This Salmonella paratyphi A (strain ATCC 9150 / SARB42) protein is Catalase-peroxidase.